The chain runs to 521 residues: Bifunctional purine biosynthesis protein PurH (521 aa).

The MGS-like domain occupies 1-145; it reads MIKQALISVS…KNHRDVTVVV (145 aa).

The protein belongs to the PurH family.

The catalysed reaction is (6R)-10-formyltetrahydrofolate + 5-amino-1-(5-phospho-beta-D-ribosyl)imidazole-4-carboxamide = 5-formamido-1-(5-phospho-D-ribosyl)imidazole-4-carboxamide + (6S)-5,6,7,8-tetrahydrofolate. The enzyme catalyses IMP + H2O = 5-formamido-1-(5-phospho-D-ribosyl)imidazole-4-carboxamide. The protein operates within purine metabolism; IMP biosynthesis via de novo pathway; 5-formamido-1-(5-phospho-D-ribosyl)imidazole-4-carboxamide from 5-amino-1-(5-phospho-D-ribosyl)imidazole-4-carboxamide (10-formyl THF route): step 1/1. It participates in purine metabolism; IMP biosynthesis via de novo pathway; IMP from 5-formamido-1-(5-phospho-D-ribosyl)imidazole-4-carboxamide: step 1/1. The polypeptide is Bifunctional purine biosynthesis protein PurH (Paraburkholderia xenovorans (strain LB400)).